The primary structure comprises 294 residues: NADH-cytochrome b5 reductase 2 (294 aa).

The chain crosses the membrane as a helical span at residues 11-27 (VLLPVVAAATSIGLVYH). The 105-residue stretch at 45–149 (DEWIDLKLKK…KGPIVKWKWE (105 aa)) folds into the FAD-binding FR-type domain. 152–187 (QFQSIALIGGGTGITPLYQLLHEITKNPEDKTKVKL) serves as a coordination point for FAD.

Belongs to the flavoprotein pyridine nucleotide cytochrome reductase family. The cofactor is FAD.

It localises to the mitochondrion outer membrane. It carries out the reaction 2 Fe(III)-[cytochrome b5] + NADH = 2 Fe(II)-[cytochrome b5] + NAD(+) + H(+). In terms of biological role, may mediate the reduction of outer membrane cytochrome b5. The protein is NADH-cytochrome b5 reductase 2 (MCR1) of Meyerozyma guilliermondii (strain ATCC 6260 / CBS 566 / DSM 6381 / JCM 1539 / NBRC 10279 / NRRL Y-324) (Yeast).